The sequence spans 329 residues: POU domain, class 5, transcription factor 2 (329 aa).

The span at 1 to 14 shows a compositional bias: polar residues; it reads MAGRRSSNVFPLSG. The tract at residues 1–24 is disordered; that stretch reads MAGRRSSNVFPLSGNSGGGLEVDT. Positions 107–181 constitute a POU-specific domain; sequence DVSAIQKEME…LLKMWLEEVD (75 aa). Residues 199-258 constitute a DNA-binding region (homeobox); sequence RKRRRASRERRIGSNLEKLFLQCPEPTPQQISYIAGRLRLQKDLVQVWFSNRSQMGSWPT.

It belongs to the POU transcription factor family. Class-5 subfamily. As to expression, in adult brain, expressed in the olfactory bulb, becoming specifically concentrated in the mitral cell layer. Also found in the pyramidal cell layer of the hippocampus, in the granule cell layer of the cerebellum and in the cortex.

It localises to the nucleus. In terms of biological role, transcription factor that binds preferentially to the octamer motif (5'-ATGTTAAT-3'). May exert a regulatory function in meiotic events that are required for terminal differentiation of male germ cell. The chain is POU domain, class 5, transcription factor 2 (Pou5f2) from Mus musculus (Mouse).